The following is a 674-amino-acid chain: Leucine-rich repeat transmembrane protein FLRT1 (674 aa).

The first 51 residues, 1-51, serve as a signal peptide directing secretion; that stretch reads MVVAHSAATATTTPAATVTATVVMTTATMDLRDWLFLCYGLIAFLTEVIDS. At 52 to 552 the chain is on the extracellular side; that stretch reads TTCPSVCRCD…QNAGPMAGLP (501 aa). 2 cysteine pairs are disulfide-bonded: C54–C60 and C58–C67. The LRRNT domain occupies 54-80; the sequence is CPSVCRCDNGFIYCNDRGLTSIPSDIP. LRR repeat units follow at residues 81–105, 106–126, 127–149, 151–175, 176–197, 198–220, 222–246, 247–269, 270–292, and 293–316; these read DDATTLYLQNNQINNAGIPQDLKTK, VKVQVIYLYENDLDEFPINLP, RSLRELHLQDNNVRTIARDSLAR, PLLEKLHLDDNSVSTVSIEEDAFAD, SKQLKLLFLSRNHLSSIPSGLP, HTLEELRLDDNRISTIPLHAFKG, NSLRRLVLDGNLLANQRIADDTFSR, LQNLTELSLVRNSLAAPPLNLPS, AHLQKLYLQDNAISHIPYNTLAK, and MRELERLDLSNNNLTTLPRGLFDD. N305 carries N-linked (GlcNAc...) asparagine glycosylation. Positions 328–379 constitute an LRRCT domain; the sequence is NPWFCGCNLMWLRDWVRARAAVVNVRGLMCQGPEKVRGMAIKDITSEMDECF. Residues C332 and C357 are joined by a disulfide bond. A Fibronectin type-III domain is found at 437–532; it reads KTLVIQVKPL…VCAKAETADS (96 aa). The chain crosses the membrane as a helical span at residues 553 to 573; it reads LAGIIGGAVALVFLFLVLGAI. The Cytoplasmic segment spans residues 574–674; it reads CWYVHRAGEL…GIPDVDYSYT (101 aa). Y600, Y633, and Y671 each carry phosphotyrosine.

Interacts with FGFR1. Interacts (via extracellular domain) with ADGRL1/LPHN1 and ADGRL3 (via olfactomedin-like domain). Phosphorylated in response to FGFR1 signaling, but is not a direct substrate of FGFR1 or SRC. A mutant where the Tyr phosphorylation sites have been replaced by Phe displays constitutive FGFR1-dependent activation of downstream MAP kinases. Post-translationally, N-glycosylated. In terms of processing, proteolytic cleavage in the juxtamembrane region gives rise to a soluble ectodomain. In terms of tissue distribution, detected in brain (at protein level).

It is found in the cell membrane. It localises to the endoplasmic reticulum membrane. The protein localises to the cytoplasmic vesicle membrane. Its subcellular location is the cytoplasm. The protein resides in the perinuclear region. It is found in the cell junction. It localises to the focal adhesion. The protein localises to the secreted. Its subcellular location is the cell projection. The protein resides in the neuron projection. In terms of biological role, plays a role in fibroblast growth factor-mediated signaling cascades that lead to the activation of MAP kinases. Promotes neurite outgrowth via FGFR1-mediated activation of downstream MAP kinases. Promotes an increase both in neurite number and in neurite length. May play a role in cell-cell adhesion and cell guidance via its interaction with ADGRL1/LPHN1 and ADGRL3. This Mus musculus (Mouse) protein is Leucine-rich repeat transmembrane protein FLRT1.